Reading from the N-terminus, the 585-residue chain is Testis-specific serine kinase substrate (585 aa).

Residues 91-108 are compositionally biased toward low complexity; it reads EPDSSGTDSTTEDSGPLA. A disordered region spans residues 91 to 125; it reads EPDSSGTDSTTEDSGPLALPGPPASPTTPWAPEDP. At Ser224 the chain carries Phosphoserine. Disordered regions lie at residues 264–312 and 559–585; these read HGLS…SEQE and LEGSTGAMGGGSNGGAPPKRGSPGSEQ. The residue at position 281 (Ser281) is a Phosphoserine; by TSSK1 and TSSK2. Ser309 carries the phosphoserine modification.

Post-translationally, phosphorylated on serine residue(s) by STK22A/TSSK1 and STK22B/TSSK2. As to expression, testis specific.

The protein resides in the cytoplasm. Its subcellular location is the cytoskeleton. The protein localises to the microtubule organizing center. It is found in the centrosome. It localises to the centriole. The protein resides in the cytoplasmic vesicle. Its subcellular location is the secretory vesicle. The protein localises to the acrosome. Functionally, may play a role in testicular physiology, most probably in the process of spermatogenesis or spermatid development. The sequence is that of Testis-specific serine kinase substrate (Tsks) from Mus musculus (Mouse).